The sequence spans 554 residues: Transcription factor 7-like 1-A (554 aa).

Residues 1 to 11 (MPQLNSGGGDE) show a composition bias toward gly residues. Positions 1 to 61 (MPQLNSGGGD…SENHSSDSDS (61 aa)) are interaction with CTNNB1-A. Disordered regions lie at residues 1–73 (MPQL…REAF), 183–213 (GTPP…PYYP), and 391–475 (WSAR…LTTK). Basic and acidic residues-rich tracts occupy residues 17-32 (ELIR…EKSP) and 52-73 (SENH…REAF). Positions 109–312 (LGGHYLPNGA…SPNLHTKSNM (204 aa)) are interaction with AES and TLE4-A. The HMG box DNA-binding region spans 324–392 (IKKPLNAFML…LHSQLYPSWS (69 aa)). A compositionally biased stretch (basic and acidic residues) spans 407 to 416 (KQSPEMETHT). Residues 408-554 (QSPEMETHTK…PLSLVTKSSD (147 aa)) are interaction with CTBP-B. A compositionally biased stretch (low complexity) spans 445 to 464 (SPATPSAALASPAAPAATHS). Residues 465 to 474 (EQAQPLSLTT) show a composition bias toward polar residues.

Belongs to the TCF/LEF family. As to quaternary structure, interacts with csnk1e, ctnnb1-A, ctbp-B, dact1-A and gsk3b. May interact with ase and tle4-A. In terms of processing, phosphorylated. Phosphorylation by csnk1e promotes binding to ctnnb1-A while phosphorylation by gsk3b may reverse this effect.

The protein resides in the cytoplasm. It localises to the nucleus. In terms of biological role, participates in the Wnt signaling pathway. Binds to DNA and acts as a repressor in the absence of ctnnb1-A and possibly ctnnb1-B, and as an activator in the presence of these proteins. Required early in development for the establishment of the dorsal body axis in response to maternal Wnt signaling. Also required during development of the CNS for the establishment of dorsal-ventral patterning in the prospective diencephalon. This is Transcription factor 7-like 1-A (tcf7l1-a) from Xenopus laevis (African clawed frog).